The chain runs to 528 residues: MSLVKLYDTTLRDGTQAEDISFLVEDKIRIAHKLDEIGIHYIEGGWPGSNPKDVAFFKDIKKEKLSQAKIAAFGSTRRAKVTPDKDHNLKTLIQAEPDVCTIFGKTWDFHVHEALRISLEENLELIFDSLEYLKANVPEVFYDAEHFFDGYKANPDYAIKTLKAAQDAKADCIVLCDTNGGTMPFELVEIIREVRKHITAPLGIHTHNDSECAVANSLHAVSEGIVQVQGTINGFGERCGNANLCSIIPALKLKMKRECIGDDQLRKLRDLSRFVYELANLSPNKHQAYVGNSAFAHKGGVHVSAIQRHPETYEHLRPELVGNMTRVLVSDLSGRSNILAKAEEFNIKMDSKDPVTLEILENIKEMENRGYQFEGAEASFELLMKRALGTHRKFFSVIGFRVIDEKRHEDQKPLSEATIMVKVGGKIEHTAAEGNGPVNALDNALRKALEKFYPRLKEVKLLDYKVRVLPAGQGTASSIRVLIESGDKESRWGTVGVSENIVDASYQALLDSVEYKLHKSEEIEGSKK.

Residues 4–266 form the Pyruvate carboxyltransferase domain; it reads VKLYDTTLRD…RECIGDDQLR (263 aa).

Belongs to the alpha-IPM synthase/homocitrate synthase family.

The catalysed reaction is pyruvate + acetyl-CoA + H2O = (3R)-citramalate + CoA + H(+). It participates in amino-acid biosynthesis; L-isoleucine biosynthesis; 2-oxobutanoate from pyruvate: step 1/3. Catalyzes the condensation of pyruvate and acetyl-coenzyme A to form (R)-citramalate. Makes part of the main pathway for isoleucine biosynthesis in G.sulfurreducens, i.e. the citramalate-dependent pathway. This Geobacter sulfurreducens (strain ATCC 51573 / DSM 12127 / PCA) protein is (R)-citramalate synthase.